A 306-amino-acid polypeptide reads, in one-letter code: N-acetylmuramic acid 6-phosphate etherase (306 aa).

The 164-residue stretch at 55 to 218 (AAATLLAGGR…STGAMIKIGK (164 aa)) folds into the SIS domain. The Proton donor role is filled by Glu-83. Residue Glu-114 is part of the active site.

The protein belongs to the GCKR-like family. MurNAc-6-P etherase subfamily. Homodimer.

The enzyme catalyses N-acetyl-D-muramate 6-phosphate + H2O = N-acetyl-D-glucosamine 6-phosphate + (R)-lactate. It participates in amino-sugar metabolism; 1,6-anhydro-N-acetylmuramate degradation. The protein operates within amino-sugar metabolism; N-acetylmuramate degradation. Its pathway is cell wall biogenesis; peptidoglycan recycling. Specifically catalyzes the cleavage of the D-lactyl ether substituent of MurNAc 6-phosphate, producing GlcNAc 6-phosphate and D-lactate. Together with AnmK, is also required for the utilization of anhydro-N-acetylmuramic acid (anhMurNAc) either imported from the medium or derived from its own cell wall murein, and thus plays a role in cell wall recycling. This Erwinia tasmaniensis (strain DSM 17950 / CFBP 7177 / CIP 109463 / NCPPB 4357 / Et1/99) protein is N-acetylmuramic acid 6-phosphate etherase.